A 620-amino-acid chain; its full sequence is Cilia- and flagella-associated protein 52 (620 aa).

WD repeat units follow at residues 62 to 106, 109 to 150, 156 to 195, 288 to 327, 330 to 369, 372 to 411, 415 to 454, 459 to 498, 500 to 541, 543 to 582, and 585 to 620; these read GHGN…LIAR, LHKG…AICG, LNVG…RKIW, QLQG…ETLI, CHFE…ELLR, VPNM…LMYT, AHRI…QKLE, EHKS…RNQM, LANT…RELE, SLSG…VTHV, and GHSG…PFAS.

It belongs to the CFAP52 family. As to quaternary structure, microtubule inner protein component of sperm flagellar doublet microtubules. Interacts with BRCA2. Interacts with the CCT chaperonin complex. Interacts with HSP70. Interacts with AK8. Interacts with CFAP45. Interacts with DNAI1. Interacts with IQDC.

Its subcellular location is the cytoplasm. It localises to the cytoskeleton. The protein localises to the cilium axoneme. It is found in the flagellum axoneme. Microtubule inner protein (MIP) part of the dynein-decorated doublet microtubules (DMTs) in cilia axoneme. Important for proper ciliary and flagellar beating. May act in cooperation with CFAP45 and axonemal dynein subunit DNAH11. May play a role in cell growth and/or survival. This is Cilia- and flagella-associated protein 52 from Mus musculus (Mouse).